The sequence spans 255 residues: Hydroxyacylglutathione hydrolase (255 aa).

Residues His56, His58, Asp60, His61, His114, Asp133, and His171 each contribute to the Zn(2+) site.

This sequence belongs to the metallo-beta-lactamase superfamily. Glyoxalase II family. In terms of assembly, monomer. Zn(2+) is required as a cofactor.

It catalyses the reaction an S-(2-hydroxyacyl)glutathione + H2O = a 2-hydroxy carboxylate + glutathione + H(+). Its pathway is secondary metabolite metabolism; methylglyoxal degradation; (R)-lactate from methylglyoxal: step 2/2. Its function is as follows. Thiolesterase that catalyzes the hydrolysis of S-D-lactoyl-glutathione to form glutathione and D-lactic acid. The polypeptide is Hydroxyacylglutathione hydrolase (Mesorhizobium japonicum (strain LMG 29417 / CECT 9101 / MAFF 303099) (Mesorhizobium loti (strain MAFF 303099))).